A 405-amino-acid chain; its full sequence is Acetylornithine/succinyldiaminopimelate aminotransferase (405 aa).

Pyridoxal 5'-phosphate contacts are provided by residues 107–108 (GA) and Phe140. Residue Arg143 coordinates N(2)-acetyl-L-ornithine. 225–228 (DEVQ) serves as a coordination point for pyridoxal 5'-phosphate. Residue Lys254 is modified to N6-(pyridoxal phosphate)lysine. Thr282 is a N(2)-acetyl-L-ornithine binding site. Position 283 (Thr283) interacts with pyridoxal 5'-phosphate.

Belongs to the class-III pyridoxal-phosphate-dependent aminotransferase family. ArgD subfamily. Homodimer. Pyridoxal 5'-phosphate serves as cofactor.

Its subcellular location is the cytoplasm. The enzyme catalyses N(2)-acetyl-L-ornithine + 2-oxoglutarate = N-acetyl-L-glutamate 5-semialdehyde + L-glutamate. It catalyses the reaction N-succinyl-(2S,6S)-2,6-diaminopimelate + 2-oxoglutarate = (S)-2-succinylamino-6-oxoheptanedioate + L-glutamate. It functions in the pathway amino-acid biosynthesis; L-arginine biosynthesis; N(2)-acetyl-L-ornithine from L-glutamate: step 4/4. The protein operates within amino-acid biosynthesis; L-lysine biosynthesis via DAP pathway; LL-2,6-diaminopimelate from (S)-tetrahydrodipicolinate (succinylase route): step 2/3. In terms of biological role, involved in both the arginine and lysine biosynthetic pathways. The protein is Acetylornithine/succinyldiaminopimelate aminotransferase of Yersinia pestis.